A 350-amino-acid polypeptide reads, in one-letter code: 3-isopropylmalate dehydrogenase (350 aa).

76-87 (GPKWDNAPKRPE) is an NAD(+) binding site. Positions 94, 104, 132, and 217 each coordinate substrate. D217, D241, and D245 together coordinate Mg(2+). Residue 275 to 287 (GSAPDIANQNIAN) participates in NAD(+) binding.

Belongs to the isocitrate and isopropylmalate dehydrogenases family. LeuB type 1 subfamily. Homodimer. Mg(2+) serves as cofactor. Mn(2+) is required as a cofactor.

The protein localises to the cytoplasm. The catalysed reaction is (2R,3S)-3-isopropylmalate + NAD(+) = 4-methyl-2-oxopentanoate + CO2 + NADH. The protein operates within amino-acid biosynthesis; L-leucine biosynthesis; L-leucine from 3-methyl-2-oxobutanoate: step 3/4. In terms of biological role, catalyzes the oxidation of 3-carboxy-2-hydroxy-4-methylpentanoate (3-isopropylmalate) to 3-carboxy-4-methyl-2-oxopentanoate. The product decarboxylates to 4-methyl-2 oxopentanoate. The protein is 3-isopropylmalate dehydrogenase of Listeria monocytogenes serovar 1/2a (strain ATCC BAA-679 / EGD-e).